A 105-amino-acid chain; its full sequence is Thiosulfate sulfurtransferase GlpE (105 aa).

Residues aspartate 16–glutamate 104 form the Rhodanese domain. The Cysteine persulfide intermediate role is filled by cysteine 64.

It belongs to the GlpE family.

The protein localises to the cytoplasm. The catalysed reaction is thiosulfate + hydrogen cyanide = thiocyanate + sulfite + 2 H(+). It carries out the reaction thiosulfate + [thioredoxin]-dithiol = [thioredoxin]-disulfide + hydrogen sulfide + sulfite + 2 H(+). Transferase that catalyzes the transfer of sulfur from thiosulfate to thiophilic acceptors such as cyanide or dithiols. May function in a CysM-independent thiosulfate assimilation pathway by catalyzing the conversion of thiosulfate to sulfite, which can then be used for L-cysteine biosynthesis. The polypeptide is Thiosulfate sulfurtransferase GlpE (Pseudoalteromonas translucida (strain TAC 125)).